We begin with the raw amino-acid sequence, 88 residues long: uncharacterized protein (88 aa).

Residues 1–54 (AVDAYDDDDNLKNEEGDYYNESDDGYSGDEEEEEKQEEDEQDDDDLQFDDGVPE) form a disordered region. The segment covering 16-53 (GDYYNESDDGYSGDEEEEEKQEEDEQDDDDLQFDDGVP) has biased composition (acidic residues).

In terms of tissue distribution, predominantly in developing fruit.

This is an uncharacterized protein from Fragaria ananassa (Strawberry).